The following is a 103-amino-acid chain: Sec-independent protein translocase protein TatA (103 aa).

The helical transmembrane segment at Met-1–Ala-21 threads the bilayer. The segment at Val-42–Pro-103 is disordered. Residues Pro-52 to Pro-90 are compositionally biased toward low complexity. The span at Gln-94–Pro-103 shows a compositional bias: basic and acidic residues.

It belongs to the TatA/E family. The Tat system comprises two distinct complexes: a TatABC complex, containing multiple copies of TatA, TatB and TatC subunits, and a separate TatA complex, containing only TatA subunits. Substrates initially bind to the TatABC complex, which probably triggers association of the separate TatA complex to form the active translocon.

Its subcellular location is the cell membrane. Its function is as follows. Part of the twin-arginine translocation (Tat) system that transports large folded proteins containing a characteristic twin-arginine motif in their signal peptide across membranes. TatA could form the protein-conducting channel of the Tat system. The protein is Sec-independent protein translocase protein TatA of Corynebacterium efficiens (strain DSM 44549 / YS-314 / AJ 12310 / JCM 11189 / NBRC 100395).